The following is a 256-amino-acid chain: Small ribosomal subunit protein eS1 (256 aa).

The residue at position 2 (alanine 2) is an N-acetylalanine; partial.

Belongs to the eukaryotic ribosomal protein eS1 family. Component of the small ribosomal subunit. Mature ribosomes consist of a small (40S) and a large (60S) subunit. The 40S subunit contains about 33 different proteins and 1 molecule of RNA (18S). The 60S subunit contains about 49 different proteins and 3 molecules of RNA (25S, 5.8S and 5S).

Its subcellular location is the cytoplasm. This Fusarium vanettenii (strain ATCC MYA-4622 / CBS 123669 / FGSC 9596 / NRRL 45880 / 77-13-4) (Fusarium solani subsp. pisi) protein is Small ribosomal subunit protein eS1.